A 624-amino-acid chain; its full sequence is Probable potassium transport system protein Kup (624 aa).

The next 12 helical transmembrane spans lie at A16–Y36, I59–V79, F106–P126, F147–T167, F174–I194, L211–T231, W252–I272, I292–G312, I342–F362, A371–V391, T394–A414, and T418–M438.

The protein belongs to the HAK/KUP transporter (TC 2.A.72) family.

The protein localises to the cell membrane. The enzyme catalyses K(+)(in) + H(+)(in) = K(+)(out) + H(+)(out). In terms of biological role, transport of potassium into the cell. Likely operates as a K(+):H(+) symporter. The sequence is that of Probable potassium transport system protein Kup from Corynebacterium glutamicum (strain ATCC 13032 / DSM 20300 / JCM 1318 / BCRC 11384 / CCUG 27702 / LMG 3730 / NBRC 12168 / NCIMB 10025 / NRRL B-2784 / 534).